Reading from the N-terminus, the 1012-residue chain is Probable inorganic carbon transporter subunit DabA (1012 aa).

Cys489, Asp491, His679, and Cys694 together coordinate Zn(2+).

This sequence belongs to the inorganic carbon transporter (TC 9.A.2) DabA family. In terms of assembly, forms a complex with DabB. The cofactor is Zn(2+).

Its subcellular location is the cell inner membrane. In terms of biological role, part of an energy-coupled inorganic carbon pump. This chain is Probable inorganic carbon transporter subunit DabA, found in Dechloromonas aromatica (strain RCB).